Reading from the N-terminus, the 278-residue chain is 2-dehydro-3-deoxyphosphooctonate aldolase (278 aa).

Belongs to the KdsA family.

Its subcellular location is the cytoplasm. It carries out the reaction D-arabinose 5-phosphate + phosphoenolpyruvate + H2O = 3-deoxy-alpha-D-manno-2-octulosonate-8-phosphate + phosphate. It functions in the pathway carbohydrate biosynthesis; 3-deoxy-D-manno-octulosonate biosynthesis; 3-deoxy-D-manno-octulosonate from D-ribulose 5-phosphate: step 2/3. It participates in bacterial outer membrane biogenesis; lipopolysaccharide biosynthesis. The sequence is that of 2-dehydro-3-deoxyphosphooctonate aldolase from Bartonella tribocorum (strain CIP 105476 / IBS 506).